Reading from the N-terminus, the 106-residue chain is Urease subunit beta (106 aa).

This sequence belongs to the urease beta subunit family. Heterotrimer of UreA (gamma), UreB (beta) and UreC (alpha) subunits. Three heterotrimers associate to form the active enzyme.

The protein localises to the cytoplasm. The enzyme catalyses urea + 2 H2O + H(+) = hydrogencarbonate + 2 NH4(+). It functions in the pathway nitrogen metabolism; urea degradation; CO(2) and NH(3) from urea (urease route): step 1/1. This chain is Urease subunit beta, found in Parasynechococcus marenigrum (strain WH8102).